The sequence spans 327 residues: FERM domain-containing protein 6 (327 aa).

The FERM domain maps to 16 to 320 (RRVCIFLPND…NSHRLYMNLQ (305 aa)).

It is found in the cytoplasm. Its subcellular location is the cell membrane. The protein is FERM domain-containing protein 6 (Frmd6) of Rattus norvegicus (Rat).